Consider the following 430-residue polypeptide: Enolase (430 aa).

Gln-168 provides a ligand contact to (2R)-2-phosphoglycerate. Catalysis depends on Glu-210, which acts as the Proton donor. Positions 247, 288, and 315 each coordinate Mg(2+). (2R)-2-phosphoglycerate contacts are provided by Lys-340, Arg-369, Ser-370, and Lys-391. The active-site Proton acceptor is Lys-340.

It belongs to the enolase family. Requires Mg(2+) as cofactor.

The protein localises to the cytoplasm. It localises to the secreted. The protein resides in the cell surface. It catalyses the reaction (2R)-2-phosphoglycerate = phosphoenolpyruvate + H2O. It participates in carbohydrate degradation; glycolysis; pyruvate from D-glyceraldehyde 3-phosphate: step 4/5. Catalyzes the reversible conversion of 2-phosphoglycerate (2-PG) into phosphoenolpyruvate (PEP). It is essential for the degradation of carbohydrates via glycolysis. In Rippkaea orientalis (strain PCC 8801 / RF-1) (Cyanothece sp. (strain PCC 8801)), this protein is Enolase.